The sequence spans 202 residues: TPEQQRYVDLFIVVDHGMFMKYNGNSDKIRRRIHQMVNIMKEAYSTMYIDILLTGVEIWSNKDLINVQPAAPQTLDSFGEWRKTDLLNRKSHDNAQLLTSTDFNGPTIGLAYVGSMCDPKRSTGVIQDHSEQDLMVAITMAHELGHNLGISHDTGSCSCGGYSCIMSPVLSHEPSKYFSDCSYIQCWDFIMKENPQCILNKR.

The 197-residue stretch at 6–202 (RYVDLFIVVD…ENPQCILNKR (197 aa)) folds into the Peptidase M12B domain. The Ca(2+) site is built by Asp9 and Asp93. Intrachain disulfides connect Cys117–Cys197, Cys157–Cys181, and Cys159–Cys164. Residue His142 coordinates Zn(2+). Glu143 is a catalytic residue. His146 and His152 together coordinate Zn(2+). 2 residues coordinate Ca(2+): Cys197 and Asn200.

It belongs to the venom metalloproteinase (M12B) family. P-I subfamily. As to quaternary structure, monomer. It depends on Zn(2+) as a cofactor. Expressed by the venom gland.

The protein localises to the secreted. Inhibited by EDTA, DTT and high concentrations of zinc ions (&gt;2 mM). Weakly inhibited by TLCK. Not inhibited by PMSF. Activated by calcium ions. Its function is as follows. Snake venom zinc metalloproteinase that acts on fibrinogen, fibrin, fibronectin (FN1), type I collagen, type IV collagen, integrin alpha-7/beta-1 (ITGA7/ITGB1) and integrin alpha-1/beta-1 (ITGA1/ITGB1). Binds to fibronectin (FN1), fibrinogen and, weakly, to type I collagen and laminin. Cleaves Xaa-Leu bonds. Inhibits ADP- and collagen-induced platelet aggregation both in the presence (IC(50)=1.4 uM for collagen) and in the absence (IC(50)=2.2 uM for collagen) of cofactors. Has hemorrhagic activity. This chain is Snake venom metalloproteinase atroxlysin-1, found in Bothrops atrox (Barba amarilla).